A 113-amino-acid polypeptide reads, in one-letter code: Large ribosomal subunit protein P2 (113 aa).

A disordered region spans residues 66–113; the sequence is PVGGGGAVAAADAAPAAAAGGDKKEAKKEEKKEESESEDDDMGFALFE. Residues 73–85 are compositionally biased toward low complexity; sequence VAAADAAPAAAAG. The span at 86–99 shows a compositional bias: basic and acidic residues; the sequence is GDKKEAKKEEKKEE. 2 positions are modified to phosphoserine: Ser100 and Ser102.

Belongs to the eukaryotic ribosomal protein P1/P2 family. In terms of assembly, P1 and P2 exist as dimers at the large ribosomal subunit.

Its function is as follows. Plays an important role in the elongation step of protein synthesis. The protein is Large ribosomal subunit protein P2 (RpLP2) of Drosophila melanogaster (Fruit fly).